The sequence spans 1065 residues: Carbamoyl phosphate synthase large chain (1065 aa).

Positions 1-401 (MPKRTDIETI…AMLKAVRSLE (401 aa)) are carboxyphosphate synthetic domain. The ATP site is built by arginine 129, arginine 169, glycine 175, glycine 176, lysine 208, isoleucine 210, glutamate 215, glycine 241, isoleucine 242, histidine 243, glutamine 284, and glutamate 298. One can recognise an ATP-grasp 1 domain in the interval 133–327 (RNLMYELGAP…IAKLAAKIAV (195 aa)). Glutamine 284, glutamate 298, and asparagine 300 together coordinate Mg(2+). Mn(2+)-binding residues include glutamine 284, glutamate 298, and asparagine 300. The interval 402–546 (TGQVHLELKH…YGTYEEENES (145 aa)) is oligomerization domain. Positions 547-929 (IKSEKPSVVV…ALYKGLVAAG (383 aa)) are carbamoyl phosphate synthetic domain. An ATP-grasp 2 domain is found at 671 to 861 (EQALRDLNIP…MANIATKAIL (191 aa)). ATP is bound by residues arginine 707, arginine 746, leucine 748, glutamate 752, glycine 777, valine 778, histidine 779, serine 780, glutamine 820, and glutamate 832. 3 residues coordinate Mg(2+): glutamine 820, glutamate 832, and asparagine 834. Residues glutamine 820, glutamate 832, and asparagine 834 each contribute to the Mn(2+) site. One can recognise an MGS-like domain in the interval 930 to 1065 (MEIRTEGTVL…EEMPKAEVVH (136 aa)). The tract at residues 930 to 1065 (MEIRTEGTVL…EEMPKAEVVH (136 aa)) is allosteric domain.

This sequence belongs to the CarB family. As to quaternary structure, composed of two chains; the small (or glutamine) chain promotes the hydrolysis of glutamine to ammonia, which is used by the large (or ammonia) chain to synthesize carbamoyl phosphate. Tetramer of heterodimers (alpha,beta)4. It depends on Mg(2+) as a cofactor. Mn(2+) serves as cofactor.

It catalyses the reaction hydrogencarbonate + L-glutamine + 2 ATP + H2O = carbamoyl phosphate + L-glutamate + 2 ADP + phosphate + 2 H(+). It carries out the reaction hydrogencarbonate + NH4(+) + 2 ATP = carbamoyl phosphate + 2 ADP + phosphate + 2 H(+). The protein operates within amino-acid biosynthesis; L-arginine biosynthesis; carbamoyl phosphate from bicarbonate: step 1/1. It participates in pyrimidine metabolism; UMP biosynthesis via de novo pathway; (S)-dihydroorotate from bicarbonate: step 1/3. Functionally, large subunit of the glutamine-dependent carbamoyl phosphate synthetase (CPSase). CPSase catalyzes the formation of carbamoyl phosphate from the ammonia moiety of glutamine, carbonate, and phosphate donated by ATP, constituting the first step of 2 biosynthetic pathways, one leading to arginine and/or urea and the other to pyrimidine nucleotides. The large subunit (synthetase) binds the substrates ammonia (free or transferred from glutamine from the small subunit), hydrogencarbonate and ATP and carries out an ATP-coupled ligase reaction, activating hydrogencarbonate by forming carboxy phosphate which reacts with ammonia to form carbamoyl phosphate. This chain is Carbamoyl phosphate synthase large chain, found in Lysinibacillus sphaericus (strain C3-41).